The primary structure comprises 452 residues: Bifunctional purine biosynthesis protein PurH (452 aa).

The region spanning 1 to 115 is the MGS-like domain; that stretch reads MKRILVSLYE…KNWKKVKPAF (115 aa).

The protein belongs to the PurH family.

The catalysed reaction is (6R)-10-formyltetrahydrofolate + 5-amino-1-(5-phospho-beta-D-ribosyl)imidazole-4-carboxamide = 5-formamido-1-(5-phospho-D-ribosyl)imidazole-4-carboxamide + (6S)-5,6,7,8-tetrahydrofolate. The enzyme catalyses IMP + H2O = 5-formamido-1-(5-phospho-D-ribosyl)imidazole-4-carboxamide. Its pathway is purine metabolism; IMP biosynthesis via de novo pathway; 5-formamido-1-(5-phospho-D-ribosyl)imidazole-4-carboxamide from 5-amino-1-(5-phospho-D-ribosyl)imidazole-4-carboxamide (10-formyl THF route): step 1/1. The protein operates within purine metabolism; IMP biosynthesis via de novo pathway; IMP from 5-formamido-1-(5-phospho-D-ribosyl)imidazole-4-carboxamide: step 1/1. In Thermotoga maritima (strain ATCC 43589 / DSM 3109 / JCM 10099 / NBRC 100826 / MSB8), this protein is Bifunctional purine biosynthesis protein PurH.